The sequence spans 356 residues: GTPase Obg (356 aa).

In terms of domain architecture, Obg spans 1–159; the sequence is MKFIDRVKIH…RWLRLELKLL (159 aa). One can recognise an OBG-type G domain in the interval 160–331; it reads ADVGLLGMPN…LVAEVARELE (172 aa). GTP-binding positions include 166–173, 191–195, 213–216, 283–286, and 312–314; these read GMPNAGKS, FTTLV, DIPG, SKID, and SAV. Mg(2+) contacts are provided by Ser-173 and Thr-193.

This sequence belongs to the TRAFAC class OBG-HflX-like GTPase superfamily. OBG GTPase family. In terms of assembly, monomer. The cofactor is Mg(2+).

Its subcellular location is the cytoplasm. Functionally, an essential GTPase which binds GTP, GDP and possibly (p)ppGpp with moderate affinity, with high nucleotide exchange rates and a fairly low GTP hydrolysis rate. Plays a role in control of the cell cycle, stress response, ribosome biogenesis and in those bacteria that undergo differentiation, in morphogenesis control. The sequence is that of GTPase Obg from Syntrophotalea carbinolica (strain DSM 2380 / NBRC 103641 / GraBd1) (Pelobacter carbinolicus).